A 598-amino-acid polypeptide reads, in one-letter code: UvrABC system protein C (598 aa).

One can recognise a GIY-YIG domain in the interval 14–91 (DSPGCYLHKD…IQKNMPKYNI (78 aa)). Positions 196 to 231 (DKIIEDLRSKMLAASEEMAFERAAEYRDLISGIATM) constitute a UVR domain.

This sequence belongs to the UvrC family. Interacts with UvrB in an incision complex.

It localises to the cytoplasm. In terms of biological role, the UvrABC repair system catalyzes the recognition and processing of DNA lesions. UvrC both incises the 5' and 3' sides of the lesion. The N-terminal half is responsible for the 3' incision and the C-terminal half is responsible for the 5' incision. The chain is UvrABC system protein C from Streptococcus pyogenes serotype M6 (strain ATCC BAA-946 / MGAS10394).